A 90-amino-acid chain; its full sequence is Probable Fe(2+)-trafficking protein (90 aa).

This sequence belongs to the Fe(2+)-trafficking protein family.

In terms of biological role, could be a mediator in iron transactions between iron acquisition and iron-requiring processes, such as synthesis and/or repair of Fe-S clusters in biosynthetic enzymes. In Cupriavidus pinatubonensis (strain JMP 134 / LMG 1197) (Cupriavidus necator (strain JMP 134)), this protein is Probable Fe(2+)-trafficking protein.